The primary structure comprises 292 residues: Glutamyl-Q tRNA(Asp) synthetase (292 aa).

L-glutamate contacts are provided by residues 9-13 (RFAPS) and Glu45. The 'HIGH' region signature appears at 12-22 (PSPSGPLHAGS). 4 residues coordinate Zn(2+): Cys99, Cys101, Tyr121, and Cys125. The L-glutamate site is built by Tyr184 and Arg202. The 'KMSKS' region motif lies at 240–244 (KLSKQ). Position 243 (Lys243) interacts with ATP.

It belongs to the class-I aminoacyl-tRNA synthetase family. GluQ subfamily. Requires Zn(2+) as cofactor.

Functionally, catalyzes the tRNA-independent activation of glutamate in presence of ATP and the subsequent transfer of glutamate onto a tRNA(Asp). Glutamate is transferred on the 2-amino-5-(4,5-dihydroxy-2-cyclopenten-1-yl) moiety of the queuosine in the wobble position of the QUC anticodon. This is Glutamyl-Q tRNA(Asp) synthetase from Verminephrobacter eiseniae (strain EF01-2).